We begin with the raw amino-acid sequence, 171 residues long: Putative defense protein (171 aa).

The first 23 residues, 1 to 23, serve as a signal peptide directing secretion; that stretch reads MKVYACLCAAVVMLVMTSRVSEA. The region spanning 24–171 is the Reelin domain; sequence RSTGAPLSAC…VQSAPIKIVS (148 aa). The cysteines at positions 33 and 110 are disulfide-linked. Asn41 carries N-linked (GlcNAc...) asparagine glycosylation.

The protein belongs to the insect defense protein family.

The protein resides in the secreted. In terms of biological role, may have antimicrobial activity. The sequence is that of Putative defense protein from Bombyx mori (Silk moth).